We begin with the raw amino-acid sequence, 362 residues long: Hydroxycarboxylate dehydrogenase A (362 aa).

Zn(2+) is bound by residues Asp173, His257, and His274.

It belongs to the iron-containing alcohol dehydrogenase family. The cofactor is Zn(2+).

The enzyme catalyses 2-hydroxybutanoate + NADP(+) = 2-oxobutanoate + NADPH + H(+). The catalysed reaction is 2-hydroxyglutarate + NADP(+) = 2-oxoglutarate + NADPH + H(+). Functionally, catalyzes the NADPH-dependent reduction of 2-oxoglutarate and 2-oxobutanoate, leading to the respective 2-hydroxycarboxylate. Cannot use NADH instead of NADPH as a redox partner. Do not catalyze the reverse reactions. This chain is Hydroxycarboxylate dehydrogenase A, found in Escherichia coli (strain K12).